The chain runs to 622 residues: Palmitoyltransferase ZDHHC13 (622 aa).

Position 1 is an N-acetylmethionine (M1). At 1 to 291 (MEGPGLGSQC…RLWRWLQKCE (291 aa)) the chain is on the cytoplasmic side. ANK repeat units lie at residues 43–78 (PLIEDSSNCDIVKATQYGIFERCKELVEAGYDVRQP), 81–110 (ENVSLLHWAAINNRLDLVKFYISKGAVVDQ), 115–144 (LNSTPLHWAIRQGHLPMVILLLQHGADPTL), 148–177 (EGFSSIHLAVLFQHMPIIAYLISKGQSVNM), 181–211 (NGQTPLMLSAHKVIGPEPTGFLLKFNPSLNV), 216–245 (HQNTPLHWAVAAGNVNAVDKLLEAGSSLDI), and 249–277 (KGETPLDMALQNKNQLIIHMLKTEAKMRA). A helical membrane pass occupies residues 292–312 (LFLLLMLSVITMWAVGYILDF). The Lumenal segment spans residues 313–320 (NSDSWLLK). The chain crosses the membrane as a helical span at residues 321–341 (GCLLVTLFFLTSLFPRFLVGY). Over 342-347 (KNLVYL) the chain is Cytoplasmic. The chain crosses the membrane as a helical span at residues 348-368 (PTAFLLSSVFWIFMTWFILFF). Over 369-370 (PD) the chain is Lumenal. Residues 371 to 391 (LAGAPFYFSFIFSIVAFLYFF) traverse the membrane as a helical segment. At 392–470 (YKTWATDPGF…RCIGFGNHHY (79 aa)) the chain is on the cytoplasmic side. Residues 426-476 (TFCTSCLIRKPLRSLHCHVCNSCVARYDQHCLWTGRCIGFGNHHYYIFFLF) enclose the DHHC domain. The S-palmitoyl cysteine intermediate role is filled by C456. Residues 471–491 (YIFFLFFLSMVCGWIIYGSFI) traverse the membrane as a helical segment. The Lumenal portion of the chain corresponds to 492-518 (YWSSHCATTFKEDGLWTYLNQIVACSP). A helical transmembrane segment spans residues 519–539 (WVLYILMLATFHFSWSTFLLL). The Cytoplasmic segment spans residues 540 to 622 (NQLFQIAFLG…PAREKVLRSV (83 aa)).

The protein belongs to the DHHC palmitoyltransferase family. AKR/ZDHHC17 subfamily. As to quaternary structure, interacts (via ANK repeats) with CLIP3. Interacts (via ANK repeats) with DNAJC5 (via C-terminus). Interacts (via ANK repeats) with HTT. Interacts (via ANK repeats) with MAP6. Interacts (via ANK repeats) with SNAP23. Interacts (via ANK repeats) with SNAP25. May interact (via ANK repeats) with SPRED2.

It localises to the golgi apparatus membrane. The protein localises to the cytoplasmic vesicle membrane. The enzyme catalyses L-cysteinyl-[protein] + hexadecanoyl-CoA = S-hexadecanoyl-L-cysteinyl-[protein] + CoA. In terms of biological role, palmitoyltransferase that could catalyze the addition of palmitate onto various protein substrates. Palmitoyltransferase for HTT and GAD2. May play a role in Mg(2+) transport. The sequence is that of Palmitoyltransferase ZDHHC13 from Pongo abelii (Sumatran orangutan).